Here is a 296-residue protein sequence, read N- to C-terminus: NADH-cytochrome b5 reductase 2 (296 aa).

A helical membrane pass occupies residues 12-29 (LPIALGVGAASIATAIIL). Residues 47–151 (NEWIDLPIIK…KGPITKWEWK (105 aa)) form the FAD-binding FR-type domain. Residue 154-189 (SYDSITLLGAGTGINPLYQLVHHIAENPEDNTKIHL) participates in FAD binding.

It belongs to the flavoprotein pyridine nucleotide cytochrome reductase family. The cofactor is FAD.

It is found in the mitochondrion outer membrane. It carries out the reaction 2 Fe(III)-[cytochrome b5] + NADH = 2 Fe(II)-[cytochrome b5] + NAD(+) + H(+). Functionally, may mediate the reduction of outer membrane cytochrome b5. This is NADH-cytochrome b5 reductase 2 (MCR1) from Kluyveromyces lactis (strain ATCC 8585 / CBS 2359 / DSM 70799 / NBRC 1267 / NRRL Y-1140 / WM37) (Yeast).